Consider the following 693-residue polypeptide: Elongation factor G (693 aa).

The tr-type G domain maps to 8 to 282 (EKTRNIGIMA…AVIDYLPSPL (275 aa)). GTP contacts are provided by residues 17–24 (AHIDAGKT), 81–85 (DTPGH), and 135–138 (NKMD).

Belongs to the TRAFAC class translation factor GTPase superfamily. Classic translation factor GTPase family. EF-G/EF-2 subfamily.

Its subcellular location is the cytoplasm. Functionally, catalyzes the GTP-dependent ribosomal translocation step during translation elongation. During this step, the ribosome changes from the pre-translocational (PRE) to the post-translocational (POST) state as the newly formed A-site-bound peptidyl-tRNA and P-site-bound deacylated tRNA move to the P and E sites, respectively. Catalyzes the coordinated movement of the two tRNA molecules, the mRNA and conformational changes in the ribosome. In Staphylococcus aureus (strain Newman), this protein is Elongation factor G.